A 263-amino-acid polypeptide reads, in one-letter code: 4-hydroxy-2-oxo-heptane-1,7-dioate aldolase (263 aa).

Histidine 45 functions as the Proton acceptor in the catalytic mechanism. A substrate-binding site is contributed by glutamine 147. Glutamate 149 provides a ligand contact to a divalent metal cation. Substrate-binding residues include alanine 174 and aspartate 175. Aspartate 175 provides a ligand contact to a divalent metal cation.

The protein belongs to the HpcH/HpaI aldolase family. Homohexamer; trimer of dimers. Requires a divalent metal cation as cofactor.

It catalyses the reaction 4-hydroxy-2-oxoheptanedioate = succinate semialdehyde + pyruvate. Its pathway is aromatic compound metabolism; 4-hydroxyphenylacetate degradation; pyruvate and succinate semialdehyde from 4-hydroxyphenylacetate: step 7/7. Catalyzes the reversible retro-aldol cleavage of 4-hydroxy-2-ketoheptane-1,7-dioate (HKHD) to pyruvate and succinic semialdehyde. The sequence is that of 4-hydroxy-2-oxo-heptane-1,7-dioate aldolase from Salmonella typhimurium (strain LT2 / SGSC1412 / ATCC 700720).